A 197-amino-acid chain; its full sequence is Probable GTP-binding protein EngB (197 aa).

The region spanning 25 to 197 (SAPEIAFAGR…VRDEFFKFTR (173 aa)) is the EngB-type G domain. GTP contacts are provided by residues 33 to 40 (GRSNVGKS), 60 to 64 (GCTRQ), 79 to 82 (DLPG), 146 to 149 (TKID), and 177 to 179 (ISV). Mg(2+)-binding residues include serine 40 and threonine 62.

It belongs to the TRAFAC class TrmE-Era-EngA-EngB-Septin-like GTPase superfamily. EngB GTPase family. The cofactor is Mg(2+).

Necessary for normal cell division and for the maintenance of normal septation. In Wolbachia sp. subsp. Brugia malayi (strain TRS), this protein is Probable GTP-binding protein EngB.